The sequence spans 400 residues: Protein phosphatase methylesterase 1 (400 aa).

Residues 32–70 (DENDGDALGSLPSFNGQSNRNRKYTGKTGSTTDRISSKE) form a disordered region. One can recognise an AB hydrolase-1 domain in the interval 114–365 (PIFIFHHGAG…DSGHFIQEDS (252 aa)). Residues Ser-205, Asp-233, and His-359 contribute to the active site.

Belongs to the AB hydrolase superfamily. Interacts with and inactivates the phosphatase PP2A-like catalytic subunits PPG1, PPH21, PPH22, PPH3 and SIT4.

The enzyme catalyses [phosphatase 2A protein]-C-terminal L-leucine methyl ester + H2O = [phosphatase 2A protein]-C-terminal L-leucine + methanol + H(+). Functionally, demethylates proteins that have been reversibly carboxymethylated. Demethylates the phosphatase PP2A catalytic subunits PPH21 and PPH22. Forms inactive complexes (PP2Ai) with phosphatase PP2A-like catalytic subunits. Involved in the regulation of cell cycle progression at START. This chain is Protein phosphatase methylesterase 1 (PPE1), found in Saccharomyces cerevisiae (strain ATCC 204508 / S288c) (Baker's yeast).